The following is a 184-amino-acid chain: Cytidylate kinase (184 aa).

8 to 16 contacts ATP; it reads GQPGSGKTT.

It belongs to the cytidylate kinase family. Type 2 subfamily.

The protein resides in the cytoplasm. It catalyses the reaction CMP + ATP = CDP + ADP. The enzyme catalyses dCMP + ATP = dCDP + ADP. The chain is Cytidylate kinase from Pyrobaculum aerophilum (strain ATCC 51768 / DSM 7523 / JCM 9630 / CIP 104966 / NBRC 100827 / IM2).